Here is an 84-residue protein sequence, read N- to C-terminus: MTDKIRTVQGKVVSDKMDKSFVVAIERTVKHPLYGKFIRRTTKLHVHDENNEAKLGDVVEIKECRPVSKTKSHTLVRVVEKAVA.

This sequence belongs to the universal ribosomal protein uS17 family. In terms of assembly, part of the 30S ribosomal subunit.

Functionally, one of the primary rRNA binding proteins, it binds specifically to the 5'-end of 16S ribosomal RNA. This is Small ribosomal subunit protein uS17 from Actinobacillus pleuropneumoniae serotype 5b (strain L20).